The sequence spans 199 residues: Probable GTP-binding protein EngB (199 aa).

Residues 28 to 199 (DLPEIALAGR…DSWDAILEQV (172 aa)) form the EngB-type G domain. GTP contacts are provided by residues 36-43 (GRSNVGKS), 63-67 (GKTQL), 81-84 (DVPG), 148-151 (TKAD), and 180-182 (FSS). Residues Ser-43 and Thr-65 each contribute to the Mg(2+) site.

It belongs to the TRAFAC class TrmE-Era-EngA-EngB-Septin-like GTPase superfamily. EngB GTPase family. Requires Mg(2+) as cofactor.

Functionally, necessary for normal cell division and for the maintenance of normal septation. The chain is Probable GTP-binding protein EngB from Streptococcus pyogenes serotype M1.